The sequence spans 503 residues: Putative (R)-citramalate synthase CimA (503 aa).

The Pyruvate carboxyltransferase domain maps to 9–257 (IRFFDTTLRD…DTGIATEELY (249 aa)).

Belongs to the alpha-IPM synthase/homocitrate synthase family. As to quaternary structure, homodimer.

The enzyme catalyses pyruvate + acetyl-CoA + H2O = (3R)-citramalate + CoA + H(+). It functions in the pathway amino-acid biosynthesis; L-isoleucine biosynthesis; 2-oxobutanoate from pyruvate: step 1/3. Its function is as follows. Catalyzes the condensation of pyruvate and acetyl-coenzyme A to form (R)-citramalate. The sequence is that of Putative (R)-citramalate synthase CimA from Methanoculleus marisnigri (strain ATCC 35101 / DSM 1498 / JR1).